A 1033-amino-acid chain; its full sequence is Integrin alpha-IIb (1033 aa).

A signal peptide spans 1-31 (MARASCAWHSLWLLQWTPLFLGPSAVPPVWA). Residues 32-988 (LNLDSEKFSV…TQLLRALEER (957 aa)) lie on the Extracellular side of the membrane. 7 FG-GAP repeats span residues 35–96 (DSEK…GGKC), 109–173 (NLGF…GRAE), 184–237 (SVYA…ISSY), 252–304 (TYDN…DSYY), 305–370 (QPLH…PQAL), 372–431 (TPTL…GLSP), and 434–495 (SQVL…VQDS). Residues N46 and N75 are each glycosylated (N-linked (GlcNAc...) asparagine). 3 cysteine pairs are disulfide-bonded: C87–C96, C138–C161, and C177–C197. Ca(2+) contacts are provided by E273, D275, D277, T280, E282, D327, N329, D331, R333, D335, D395, D399, Y401, D403, D456, D458, N460, Y462, and D464. 2 cysteine pairs are disulfide-bonded: C503–C514 and C520–C575. Residue N600 is glycosylated (N-linked (GlcNAc...) asparagine). 4 disulfides stabilise this stretch: C632/C638, C704/C717, C856/C916, and C905/C911. The N-linked (GlcNAc...) asparagine glycan is linked to N710. Residue N957 is glycosylated (N-linked (GlcNAc...) asparagine). A helical membrane pass occupies residues 989 to 1014 (AIPVWWVLVGVLGGLLLLTLLVLAMW). Residues 1015–1033 (KAGFFKRNRPPLEEDEEEE) lie on the Cytoplasmic side of the membrane. Positions 1017–1021 (GFFKR) match the GFFKR motif motif.

Belongs to the integrin alpha chain family. Heterodimer of an alpha and a beta subunit. The alpha subunit is composed of a heavy and a light chain linked by a disulfide bond. Alpha-IIb associates with beta-3. Directly interacts with RNF181. Interacts (via C-terminus cytoplasmic tail region) with CIB1; the interaction is direct and calcium-dependent. Interacts (via C-terminus cytoplasmic tail region) with CIB2, CIB3 and CIB4; the interactions are stabilized/increased in a calcium and magnesium-dependent manner. ITGA2B:ITGB3 interacts with PPIA/CYPA; the interaction is ROS and PPIase activity-dependent and is increased in the presence of thrombin. ITGA2B:ITGB3 interacts with SELP (via C-type lectin domain); the interaction mediates cell-cell interaction and adhesion. Cleaved by ELANE; the cleavage promotes activation of platelet fibrinogen receptor integrin alpha-IIb/beta-3.

The protein localises to the membrane. Integrin alpha-IIb/beta-3 is a receptor for fibronectin, fibrinogen, plasminogen, prothrombin, thrombospondin and vitronectin. It recognizes the sequence R-G-D in a wide array of ligands. It recognizes the sequence H-H-L-G-G-G-A-K-Q-A-G-D-V in fibrinogen gamma chain. Following activation integrin alpha-IIb/beta-3 brings about platelet/platelet interaction through binding of soluble fibrinogen. This step leads to rapid platelet aggregation which physically plugs ruptured endothelial cell surface. The polypeptide is Integrin alpha-IIb (Itga2b) (Mus musculus (Mouse)).